A 232-amino-acid polypeptide reads, in one-letter code: Phosphoribosylformylglycinamidine synthase subunit PurQ (232 aa).

Residues 3-232 enclose the Glutamine amidotransferase type-1 domain; sequence FAVIVFPGSN…SLVASALAVV (230 aa). Cys-86 functions as the Nucleophile in the catalytic mechanism. Residues His-203 and Glu-205 contribute to the active site.

As to quaternary structure, part of the FGAM synthase complex composed of 1 PurL, 1 PurQ and 2 PurS subunits.

It is found in the cytoplasm. The enzyme catalyses N(2)-formyl-N(1)-(5-phospho-beta-D-ribosyl)glycinamide + L-glutamine + ATP + H2O = 2-formamido-N(1)-(5-O-phospho-beta-D-ribosyl)acetamidine + L-glutamate + ADP + phosphate + H(+). It carries out the reaction L-glutamine + H2O = L-glutamate + NH4(+). It participates in purine metabolism; IMP biosynthesis via de novo pathway; 5-amino-1-(5-phospho-D-ribosyl)imidazole from N(2)-formyl-N(1)-(5-phospho-D-ribosyl)glycinamide: step 1/2. In terms of biological role, part of the phosphoribosylformylglycinamidine synthase complex involved in the purines biosynthetic pathway. Catalyzes the ATP-dependent conversion of formylglycinamide ribonucleotide (FGAR) and glutamine to yield formylglycinamidine ribonucleotide (FGAM) and glutamate. The FGAM synthase complex is composed of three subunits. PurQ produces an ammonia molecule by converting glutamine to glutamate. PurL transfers the ammonia molecule to FGAR to form FGAM in an ATP-dependent manner. PurS interacts with PurQ and PurL and is thought to assist in the transfer of the ammonia molecule from PurQ to PurL. The protein is Phosphoribosylformylglycinamidine synthase subunit PurQ of Gloeobacter violaceus (strain ATCC 29082 / PCC 7421).